The following is a 141-amino-acid chain: Large ribosomal subunit protein uL11c (141 aa).

Belongs to the universal ribosomal protein uL11 family. Part of the ribosomal stalk of the 50S ribosomal subunit. Interacts with L10 and the large rRNA to form the base of the stalk. L10 forms an elongated spine to which L12 dimers bind in a sequential fashion forming a multimeric L10(L12)X complex.

It is found in the plastid. It localises to the cyanelle. Functionally, forms part of the ribosomal stalk which helps the ribosome interact with GTP-bound translation factors. The sequence is that of Large ribosomal subunit protein uL11c from Cyanophora paradoxa.